The following is a 461-amino-acid chain: Chromosomal replication initiator protein DnaA (461 aa).

Positions 1–84 are domain I, interacts with DnaA modulators; that stretch reads MAVSLWQQCI…RFDIGSRPSA (84 aa). A domain II region spans residues 84-124; sequence AKKFEPAPVATVRAPNTQTKATVGTYFNTQAEPIANANHRS. Residues 125–341 form a domain III, AAA+ region region; that stretch reads NINPTYQFDN…GALNRVIANA (217 aa). The ATP site is built by Gly-169, Gly-171, Lys-172, and Thr-173. Residues 342–461 are domain IV, binds dsDNA; that stretch reads NFTGRPITID…YANLIRTLSS (120 aa).

It belongs to the DnaA family. Oligomerizes as a right-handed, spiral filament on DNA at oriC.

It is found in the cytoplasm. Functionally, plays an essential role in the initiation and regulation of chromosomal replication. ATP-DnaA binds to the origin of replication (oriC) to initiate formation of the DNA replication initiation complex once per cell cycle. Binds the DnaA box (a 9 base pair repeat at the origin) and separates the double-stranded (ds)DNA. Forms a right-handed helical filament on oriC DNA; dsDNA binds to the exterior of the filament while single-stranded (ss)DNA is stabiized in the filament's interior. The ATP-DnaA-oriC complex binds and stabilizes one strand of the AT-rich DNA unwinding element (DUE), permitting loading of DNA polymerase. After initiation quickly degrades to an ADP-DnaA complex that is not apt for DNA replication. Binds acidic phospholipids. The chain is Chromosomal replication initiator protein DnaA from Shewanella putrefaciens (strain CN-32 / ATCC BAA-453).